The primary structure comprises 876 residues: DNA gyrase subunit A (876 aa).

The Topo IIA-type catalytic domain maps to 34-532; sequence LPDVRDGLKP…NSVDINIEDL (499 aa). The active-site O-(5'-phospho-DNA)-tyrosine intermediate is Y122. The GyrA-box signature appears at 559 to 565; the sequence is QRRGGKG. The tract at residues 844–876 is disordered; sequence DEELDAIDGSAAEGDEDIAPEADTDDDIAEDEE. The segment covering 856–876 has biased composition (acidic residues); that stretch reads EGDEDIAPEADTDDDIAEDEE.

It belongs to the type II topoisomerase GyrA/ParC subunit family. As to quaternary structure, heterotetramer, composed of two GyrA and two GyrB chains. In the heterotetramer, GyrA contains the active site tyrosine that forms a transient covalent intermediate with DNA, while GyrB binds cofactors and catalyzes ATP hydrolysis.

The protein resides in the cytoplasm. The catalysed reaction is ATP-dependent breakage, passage and rejoining of double-stranded DNA.. A type II topoisomerase that negatively supercoils closed circular double-stranded (ds) DNA in an ATP-dependent manner to modulate DNA topology and maintain chromosomes in an underwound state. Negative supercoiling favors strand separation, and DNA replication, transcription, recombination and repair, all of which involve strand separation. Also able to catalyze the interconversion of other topological isomers of dsDNA rings, including catenanes and knotted rings. Type II topoisomerases break and join 2 DNA strands simultaneously in an ATP-dependent manner. The protein is DNA gyrase subunit A of Klebsiella oxytoca.